The following is a 461-amino-acid chain: Mannan endo-1,4-beta-mannosidase 4 (461 aa).

Positions 80 and 195 each coordinate substrate. Residue Glu196 is the Proton donor of the active site. Tyr274 contributes to the substrate binding site. Glu314 acts as the Nucleophile in catalysis. Residues Trp357 and Asp364 each coordinate substrate.

The protein belongs to the glycosyl hydrolase 5 (cellulase A) family. As to expression, ubiquitous.

The catalysed reaction is Random hydrolysis of (1-&gt;4)-beta-D-mannosidic linkages in mannans, galactomannans and glucomannans.. This Oryza sativa subsp. japonica (Rice) protein is Mannan endo-1,4-beta-mannosidase 4 (MAN4).